A 400-amino-acid chain; its full sequence is CinA-like protein (400 aa).

Belongs to the CinA family.

This is CinA-like protein from Shigella flexneri.